We begin with the raw amino-acid sequence, 385 residues long: Arginine biosynthesis bifunctional protein ArgJ (385 aa).

Substrate contacts are provided by T142, K168, T179, E259, N380, and T385. Catalysis depends on T179, which acts as the Nucleophile.

The protein belongs to the ArgJ family. Heterotetramer of two alpha and two beta chains.

The protein resides in the cytoplasm. The catalysed reaction is N(2)-acetyl-L-ornithine + L-glutamate = N-acetyl-L-glutamate + L-ornithine. It carries out the reaction L-glutamate + acetyl-CoA = N-acetyl-L-glutamate + CoA + H(+). Its pathway is amino-acid biosynthesis; L-arginine biosynthesis; L-ornithine and N-acetyl-L-glutamate from L-glutamate and N(2)-acetyl-L-ornithine (cyclic): step 1/1. It participates in amino-acid biosynthesis; L-arginine biosynthesis; N(2)-acetyl-L-ornithine from L-glutamate: step 1/4. Functionally, catalyzes two activities which are involved in the cyclic version of arginine biosynthesis: the synthesis of N-acetylglutamate from glutamate and acetyl-CoA as the acetyl donor, and of ornithine by transacetylation between N(2)-acetylornithine and glutamate. The chain is Arginine biosynthesis bifunctional protein ArgJ from Leptospira interrogans serogroup Icterohaemorrhagiae serovar copenhageni (strain Fiocruz L1-130).